The sequence spans 361 residues: Actin maturation protease (361 aa).

Residues 1–75 (MTSPCSFPLK…PPPPPLPSAV (75 aa)) are disordered. 2 stretches are compositionally biased toward pro residues: residues 24-33 (NIPPPLPLNP) and 52-72 (PLPPPPPPPAPPPPPPPPPLP). Residues 134-254 (SCIQEGPQCG…WAVSAGVLIG (121 aa)) are peptidase C39-like. The active site involves Cys142.

The protein belongs to the ACTMAP family. As to quaternary structure, interacts (via N-terminus) with PFN2 isoforms 1/IIa and 2/IIb; the interactions may facilitate efficient cleavage of the acetylated N-terminus of immature actin. Interacts with PFN1.

It localises to the cytoplasm. It carries out the reaction N-terminal N(alpha)-acetyl-L-methionyl-L-aspartyl-[protein] + H2O = N-terminal L-aspartyl-[protein] + N-acetyl-L-methionine. It catalyses the reaction N-terminal N(alpha)-acetyl-L-methionyl-L-glutamyl-[protein] + H2O = N-terminal L-glutamyl-[protein] + N-acetyl-L-methionine. The catalysed reaction is N-terminal N(alpha)-acetyl-L-cysteinyl-L-aspartyl-[protein] + H2O = N-terminal L-aspartyl-[protein] + N-acetyl-L-cysteine. The enzyme catalyses N-terminal N(alpha)-acetyl-L-cysteinyl-L-glutamyl-[protein] + H2O = N-terminal L-glutamyl-[protein] + N-acetyl-L-cysteine. Actin maturation protease that specifically mediates the cleavage of immature acetylated N-terminal actin, thereby contributing to actin maturation. Cleaves N-terminal acetylated methionine of immature cytoplasmic beta- and gamma-actins Actb and Actg1 after translation. Cleaves N-terminal acetylated cysteine of muscle alpha-actins Acta1, Actc1 and Acta2 after canonical removal of N-terminal methionine. The protein is Actin maturation protease of Mus musculus (Mouse).